The sequence spans 171 residues: LIM domain transcription factor LMO4-B (171 aa).

The span at 1–19 (MVNNRISESTTTAVSNNGS) shows a compositional bias: polar residues. A disordered region spans residues 1-20 (MVNNRISESTTTAVSNNGSP). LIM zinc-binding domains lie at 22 to 84 (KACA…LFGN) and 86 to 148 (GACN…GLLN).

Functionally, acts as a positive cofactor of GATA transcription factors to establish the identity of the ventral mesoderm during gastrulation. Down-regulation in the dorsal mesoderm is necessary for the proper formation of this territory since, when present, lmo4 may bind ldb1 and restrict the availability of this cofactor for Spemman organizer transcription factors. At neurula stages, suppresses primary neuron differentiation and modulates gene expression at the Isthmic Organizer of the midbrain-hindbrain boundary. The chain is LIM domain transcription factor LMO4-B (lmo4-b) from Xenopus laevis (African clawed frog).